The primary structure comprises 804 residues: Phenylalanine--tRNA ligase beta subunit (804 aa).

A tRNA-binding domain is found at 38 to 148 (RAAFRAFTIA…ENAPVGTSFA (111 aa)). The B5 domain occupies 401 to 476 (HTARVIDFPV…RIHGINRIDP (76 aa)). 4 residues coordinate Mg(2+): Asp-454, Asp-460, Glu-463, and Glu-464. The region spanning 710–803 (SLFQSLKRDY…VAKQTGGVLR (94 aa)) is the FDX-ACB domain.

Belongs to the phenylalanyl-tRNA synthetase beta subunit family. Type 1 subfamily. Tetramer of two alpha and two beta subunits. The cofactor is Mg(2+).

It localises to the cytoplasm. It carries out the reaction tRNA(Phe) + L-phenylalanine + ATP = L-phenylalanyl-tRNA(Phe) + AMP + diphosphate + H(+). The sequence is that of Phenylalanine--tRNA ligase beta subunit from Brucella melitensis biotype 1 (strain ATCC 23456 / CCUG 17765 / NCTC 10094 / 16M).